Consider the following 289-residue polypeptide: 4-hydroxy-3-methylbut-2-enyl diphosphate reductase (289 aa).

Cysteine 13 contributes to the [4Fe-4S] cluster binding site. The (2E)-4-hydroxy-3-methylbut-2-enyl diphosphate site is built by histidine 41 and histidine 75. Positions 41 and 75 each coordinate dimethylallyl diphosphate. Isopentenyl diphosphate-binding residues include histidine 41 and histidine 75. Cysteine 97 serves as a coordination point for [4Fe-4S] cluster. A (2E)-4-hydroxy-3-methylbut-2-enyl diphosphate-binding site is contributed by histidine 129. Histidine 129 is a binding site for dimethylallyl diphosphate. Histidine 129 serves as a coordination point for isopentenyl diphosphate. Residue glutamate 131 is the Proton donor of the active site. Threonine 167 is a (2E)-4-hydroxy-3-methylbut-2-enyl diphosphate binding site. Cysteine 198 serves as a coordination point for [4Fe-4S] cluster. (2E)-4-hydroxy-3-methylbut-2-enyl diphosphate contacts are provided by serine 226, serine 227, asparagine 228, and serine 270. Dimethylallyl diphosphate contacts are provided by serine 226, serine 227, asparagine 228, and serine 270. Isopentenyl diphosphate contacts are provided by serine 226, serine 227, asparagine 228, and serine 270.

The protein belongs to the IspH family. The cofactor is [4Fe-4S] cluster.

It catalyses the reaction isopentenyl diphosphate + 2 oxidized [2Fe-2S]-[ferredoxin] + H2O = (2E)-4-hydroxy-3-methylbut-2-enyl diphosphate + 2 reduced [2Fe-2S]-[ferredoxin] + 2 H(+). It carries out the reaction dimethylallyl diphosphate + 2 oxidized [2Fe-2S]-[ferredoxin] + H2O = (2E)-4-hydroxy-3-methylbut-2-enyl diphosphate + 2 reduced [2Fe-2S]-[ferredoxin] + 2 H(+). The protein operates within isoprenoid biosynthesis; dimethylallyl diphosphate biosynthesis; dimethylallyl diphosphate from (2E)-4-hydroxy-3-methylbutenyl diphosphate: step 1/1. It participates in isoprenoid biosynthesis; isopentenyl diphosphate biosynthesis via DXP pathway; isopentenyl diphosphate from 1-deoxy-D-xylulose 5-phosphate: step 6/6. Functionally, catalyzes the conversion of 1-hydroxy-2-methyl-2-(E)-butenyl 4-diphosphate (HMBPP) into a mixture of isopentenyl diphosphate (IPP) and dimethylallyl diphosphate (DMAPP). Acts in the terminal step of the DOXP/MEP pathway for isoprenoid precursor biosynthesis. This chain is 4-hydroxy-3-methylbut-2-enyl diphosphate reductase, found in Bacteroides thetaiotaomicron (strain ATCC 29148 / DSM 2079 / JCM 5827 / CCUG 10774 / NCTC 10582 / VPI-5482 / E50).